The sequence spans 527 residues: Cytochrome P450 714B3 (527 aa).

The Lumenal segment spans residues 1-14 (MEVAMAMAVKVLLS). A helical; Signal-anchor for type III membrane protein transmembrane segment spans residues 15 to 35 (LCCVGACGLAVYLYHILWLVP). At 36 to 527 (QKVLAKFEDQ…SVCTKRGTAI (492 aa)) the chain is on the cytoplasmic side. Cys464 is a heme binding site.

The protein belongs to the cytochrome P450 family. Requires heme as cofactor.

The protein localises to the membrane. Functionally, may be involved in gibberellin metabolism. In Zea mays (Maize), this protein is Cytochrome P450 714B3 (CYP714B3).